A 346-amino-acid chain; its full sequence is N-acetyl-gamma-glutamyl-phosphate reductase (346 aa).

Residue C149 is part of the active site.

Belongs to the NAGSA dehydrogenase family. Type 1 subfamily.

It is found in the cytoplasm. The catalysed reaction is N-acetyl-L-glutamate 5-semialdehyde + phosphate + NADP(+) = N-acetyl-L-glutamyl 5-phosphate + NADPH + H(+). It functions in the pathway amino-acid biosynthesis; L-arginine biosynthesis; N(2)-acetyl-L-ornithine from L-glutamate: step 3/4. Its function is as follows. Catalyzes the NADPH-dependent reduction of N-acetyl-5-glutamyl phosphate to yield N-acetyl-L-glutamate 5-semialdehyde. In Saccharophagus degradans (strain 2-40 / ATCC 43961 / DSM 17024), this protein is N-acetyl-gamma-glutamyl-phosphate reductase.